The chain runs to 69 residues: Putative membrane protein insertion efficiency factor (69 aa).

It belongs to the UPF0161 family.

The protein localises to the cell inner membrane. Could be involved in insertion of integral membrane proteins into the membrane. The sequence is that of Putative membrane protein insertion efficiency factor from Aromatoleum aromaticum (strain DSM 19018 / LMG 30748 / EbN1) (Azoarcus sp. (strain EbN1)).